The following is a 143-amino-acid chain: NADH-quinone oxidoreductase subunit A (143 aa).

The next 3 membrane-spanning stretches (helical) occupy residues 8–28 (FGNV…GYLT), 63–83 (FYVV…LFPW), and 93–113 (FALV…VYAW).

This sequence belongs to the complex I subunit 3 family. In terms of assembly, NDH-1 is composed of 14 different subunits. Subunits NuoA, H, J, K, L, M, N constitute the membrane sector of the complex.

The protein localises to the cell inner membrane. The enzyme catalyses a quinone + NADH + 5 H(+)(in) = a quinol + NAD(+) + 4 H(+)(out). NDH-1 shuttles electrons from NADH, via FMN and iron-sulfur (Fe-S) centers, to quinones in the respiratory chain. The immediate electron acceptor for the enzyme in this species is believed to be a menaquinone. Couples the redox reaction to proton translocation (for every two electrons transferred, four hydrogen ions are translocated across the cytoplasmic membrane), and thus conserves the redox energy in a proton gradient. The protein is NADH-quinone oxidoreductase subunit A of Chlorobium phaeovibrioides (strain DSM 265 / 1930) (Prosthecochloris vibrioformis (strain DSM 265)).